The primary structure comprises 359 residues: Holliday junction branch migration complex subunit RuvB (359 aa).

Residues 1–10 are compositionally biased toward basic and acidic residues; that stretch reads MPEHDPHQEN. The interval 1-20 is disordered; it reads MPEHDPHQENRTVSSVRLED. Residues 4 to 188 form a large ATPase domain (RuvB-L) region; it reads HDPHQENRTV…FGIPLRLIFY (185 aa). Residues leucine 27, arginine 28, glycine 69, lysine 72, threonine 73, threonine 74, 135-137, arginine 178, tyrosine 188, and arginine 225 each bind ATP; that span reads EDF. A Mg(2+)-binding site is contributed by threonine 73. Residues 189-259 form a small ATPAse domain (RuvB-S) region; it reads TASELELIVS…TADAALQRLE (71 aa). Residues 262 to 359 form a head domain (RuvB-H) region; the sequence is SLGLDAMDRR…LLHRDGSADE (98 aa). The DNA site is built by arginine 298, arginine 317, and arginine 322.

The protein belongs to the RuvB family. As to quaternary structure, homohexamer. Forms an RuvA(8)-RuvB(12)-Holliday junction (HJ) complex. HJ DNA is sandwiched between 2 RuvA tetramers; dsDNA enters through RuvA and exits via RuvB. An RuvB hexamer assembles on each DNA strand where it exits the tetramer. Each RuvB hexamer is contacted by two RuvA subunits (via domain III) on 2 adjacent RuvB subunits; this complex drives branch migration. In the full resolvosome a probable DNA-RuvA(4)-RuvB(12)-RuvC(2) complex forms which resolves the HJ.

The protein localises to the cytoplasm. It carries out the reaction ATP + H2O = ADP + phosphate + H(+). Its function is as follows. The RuvA-RuvB-RuvC complex processes Holliday junction (HJ) DNA during genetic recombination and DNA repair, while the RuvA-RuvB complex plays an important role in the rescue of blocked DNA replication forks via replication fork reversal (RFR). RuvA specifically binds to HJ cruciform DNA, conferring on it an open structure. The RuvB hexamer acts as an ATP-dependent pump, pulling dsDNA into and through the RuvAB complex. RuvB forms 2 homohexamers on either side of HJ DNA bound by 1 or 2 RuvA tetramers; 4 subunits per hexamer contact DNA at a time. Coordinated motions by a converter formed by DNA-disengaged RuvB subunits stimulates ATP hydrolysis and nucleotide exchange. Immobilization of the converter enables RuvB to convert the ATP-contained energy into a lever motion, pulling 2 nucleotides of DNA out of the RuvA tetramer per ATP hydrolyzed, thus driving DNA branch migration. The RuvB motors rotate together with the DNA substrate, which together with the progressing nucleotide cycle form the mechanistic basis for DNA recombination by continuous HJ branch migration. Branch migration allows RuvC to scan DNA until it finds its consensus sequence, where it cleaves and resolves cruciform DNA. The protein is Holliday junction branch migration complex subunit RuvB of Granulibacter bethesdensis (strain ATCC BAA-1260 / CGDNIH1).